Consider the following 64-residue polypeptide: Large ribosomal subunit protein bL28 (64 aa).

The protein belongs to the bacterial ribosomal protein bL28 family.

The polypeptide is Large ribosomal subunit protein bL28 (Desulfotalea psychrophila (strain LSv54 / DSM 12343)).